The primary structure comprises 334 residues: GTPase Obg (334 aa).

Positions Met-1 to Met-159 constitute an Obg domain. An OBG-type G domain is found at Ala-160–Leu-332. Residues Gly-166–Ser-173, Phe-191–His-195, Asp-212–Gly-215, Asn-282–Asp-285, and Ser-313–Leu-315 each bind GTP. Positions 173 and 193 each coordinate Mg(2+).

It belongs to the TRAFAC class OBG-HflX-like GTPase superfamily. OBG GTPase family. As to quaternary structure, monomer. It depends on Mg(2+) as a cofactor.

Its subcellular location is the cytoplasm. Its function is as follows. An essential GTPase which binds GTP, GDP and possibly (p)ppGpp with moderate affinity, with high nucleotide exchange rates and a fairly low GTP hydrolysis rate. Plays a role in control of the cell cycle, stress response, ribosome biogenesis and in those bacteria that undergo differentiation, in morphogenesis control. The chain is GTPase Obg from Vesicomyosocius okutanii subsp. Calyptogena okutanii (strain HA).